Reading from the N-terminus, the 153-residue chain is Endoribonuclease YbeY (153 aa).

Residues His-114, His-118, and His-124 each coordinate Zn(2+).

Belongs to the endoribonuclease YbeY family. The cofactor is Zn(2+).

It localises to the cytoplasm. Its function is as follows. Single strand-specific metallo-endoribonuclease involved in late-stage 70S ribosome quality control and in maturation of the 3' terminus of the 16S rRNA. This is Endoribonuclease YbeY from Shewanella baltica (strain OS195).